The following is a 122-amino-acid chain: Large ribosomal subunit protein bL12 (122 aa).

The protein belongs to the bacterial ribosomal protein bL12 family. Homodimer. Part of the ribosomal stalk of the 50S ribosomal subunit. Forms a multimeric L10(L12)X complex, where L10 forms an elongated spine to which 2 to 4 L12 dimers bind in a sequential fashion. Binds GTP-bound translation factors.

Its function is as follows. Forms part of the ribosomal stalk which helps the ribosome interact with GTP-bound translation factors. Is thus essential for accurate translation. The protein is Large ribosomal subunit protein bL12 of Clostridium botulinum (strain 657 / Type Ba4).